We begin with the raw amino-acid sequence, 1020 residues long: Non-canonical nonribosomal peptide synthetase hkm10 (1020 aa).

Residues glutamine 21–arginine 419 are adenylation (A) domain. The 83-residue stretch at glutamine 526–glutamine 608 folds into the Carrier domain. Serine 568 is subject to O-(pantetheine 4'-phosphoryl)serine. The tract at residues leucine 652–threonine 894 is short-chain dehydrogenase/reductase (R) domain.

It belongs to the NRP synthetase family.

The protein operates within secondary metabolite biosynthesis. Functionally, non-canonical nonribosomal peptide synthetase; part of the gene cluster that mediates the biosynthesis of hancockiamides, an unusual new family of N-cinnamoylated piperazines. The NRPS hkm10 and the NmrA-like reductase hkm9 are proposed to convert two molecules of L-Phe to the intermediary piperazine called xenocockiamide A. Xenocockiamide A is then converted to hancockiamide D via a series of hydroxylations and O-methylations. The tyrosinase hkm6 may catalyze an aromatic hydroxylation, then the 2-oxoglutarate-dependent Fe(II) dioxygenase hkm4 and the FAD-dependent phenol hydroxylase hkm7 may catalyze consecutive hydroxylations to install 2 more hydroxy groups, and the methyltransferase hkm8 probably catalyzes two methylations using 2 molecules of S-adenosyl-L-methionine (SAM). The NRPS hkm11 activates and transfers trans-cinnamate supplied by the PAL hkm12 to hancockiamide D and produces hancockiamide A. NRPS Hkm11 has the flexibility to tolerate the bulky hancockiamide G as a substrate and the absence of the acetyl-transferase hkm3 opens up the opportunity for hkm11 to introduce a second N-cinnamoyl moiety. The cytochrome P450 monooxygenase hkm5 catalyzes the methylenedioxy bridge formation, converting hancockiamide A into hancockiamide G. Hkm5 can also convert hancockiamide B into hancockiamide C, and hancockiamide D into hancockiamide H. The N-acetyltransferase hkm3 finally transfers an acetyl group to 1-N of piperazine, converting hancockiamide A into hancockiamide B and hancockiamide G into hancockiamide C. The protein is Non-canonical nonribosomal peptide synthetase hkm10 of Aspergillus hancockii.